A 140-amino-acid polypeptide reads, in one-letter code: Histone H2B (140 aa).

Residues 1–10 (MPPKAAEKKP) are compositionally biased toward basic and acidic residues. The segment at 1–48 (MPPKAAEKKPSTGGKAPAGKAPAEKKEAGKKTAAAATGDKKKRGKTRK) is disordered. N6-acetyllysine; alternate occurs at positions 8 and 9. Glycyl lysine isopeptide (Lys-Gly) (interchain with G-Cter in SUMO); alternate cross-links involve residues Lys8 and Lys9. Over residues 11-21 (STGGKAPAGKA) the composition is skewed to low complexity. At Lys15 the chain carries N6-acetyllysine. Lys25 is modified (N6-acetyllysine; alternate). A Glycyl lysine isopeptide (Lys-Gly) (interchain with G-Cter in SUMO); alternate cross-link involves residue Lys25. Lys26 is covalently cross-linked (Glycyl lysine isopeptide (Lys-Gly) (interchain with G-Cter in SUMO)). Residue Lys134 forms a Glycyl lysine isopeptide (Lys-Gly) (interchain with G-Cter in ubiquitin) linkage.

This sequence belongs to the histone H2B family. The nucleosome is a histone octamer containing two molecules each of H2A, H2B, H3 and H4 assembled in one H3-H4 heterotetramer and two H2A-H2B heterodimers. The octamer wraps approximately 147 bp of DNA. Post-translationally, monoubiquitinated by the ubc2-bre1 complex to form H2BK123ub1. H2BK123ub1 gives a specific tag for epigenetic transcriptional activation and is also prerequisite for H3K4me and H3K79me formation. H2BK123ub1 also modulates the formation of double-strand breaks during meiosis and is a prerequisite for DNA-damage checkpoint activation. In terms of processing, acetylated by gcn5 to form H2BK11ac and H2BK16ac. H2BK16ac can also be formed by esa1. Acetylation of N-terminal lysines and particularly formation of H2BK11acK16ac has a positive effect on transcription. Sumoylation to form H2BK6su or H2BK7su, and probably also H2BK16su or H2BK17su, occurs preferentially near the telomeres and represses gene transcription.

The protein resides in the nucleus. It localises to the chromosome. Core component of nucleosome. Nucleosomes wrap and compact DNA into chromatin, limiting DNA accessibility to the cellular machineries which require DNA as a template. Histones thereby play a central role in transcription regulation, DNA repair, DNA replication and chromosomal stability. DNA accessibility is regulated via a complex set of post-translational modifications of histones, also called histone code, and nucleosome remodeling. This Neosartorya fischeri (strain ATCC 1020 / DSM 3700 / CBS 544.65 / FGSC A1164 / JCM 1740 / NRRL 181 / WB 181) (Aspergillus fischerianus) protein is Histone H2B (htb1).